The sequence spans 20 residues: Non-specific lipid-transfer protein (20 aa).

This sequence belongs to the plant LTP family.

Functionally, plant non-specific lipid-transfer proteins transfer phospholipids as well as galactolipids across membranes. May play a role in wax or cutin deposition in the cell walls of expanding epidermal cells and certain secretory tissues. In Citrus limon (Lemon), this protein is Non-specific lipid-transfer protein.